Consider the following 220-residue polypeptide: Putative glutathione S-transferase C460.02c (220 aa).

The GST N-terminal domain maps to methionine 1–aspartate 81. Positions asparagine 89 to threonine 216 constitute a GST C-terminal domain.

It belongs to the GST superfamily.

It localises to the cytoplasm. The enzyme catalyses RX + glutathione = an S-substituted glutathione + a halide anion + H(+). Its function is as follows. Involved in the oxidative stress response and detoxification. The chain is Putative glutathione S-transferase C460.02c from Schizosaccharomyces pombe (strain 972 / ATCC 24843) (Fission yeast).